A 164-amino-acid polypeptide reads, in one-letter code: NADH-quinone oxidoreductase subunit I (164 aa).

4Fe-4S ferredoxin-type domains follow at residues Leu54–Gly84 and Val95–Asn124. [4Fe-4S] cluster is bound by residues Cys64, Cys67, Cys70, Cys74, Cys104, Cys107, Cys110, and Cys114.

It belongs to the complex I 23 kDa subunit family. In terms of assembly, NDH-1 is composed of 14 different subunits. Subunits NuoA, H, J, K, L, M, N constitute the membrane sector of the complex. The cofactor is [4Fe-4S] cluster.

The protein localises to the cell inner membrane. The enzyme catalyses a quinone + NADH + 5 H(+)(in) = a quinol + NAD(+) + 4 H(+)(out). NDH-1 shuttles electrons from NADH, via FMN and iron-sulfur (Fe-S) centers, to quinones in the respiratory chain. The immediate electron acceptor for the enzyme in this species is believed to be ubiquinone. Couples the redox reaction to proton translocation (for every two electrons transferred, four hydrogen ions are translocated across the cytoplasmic membrane), and thus conserves the redox energy in a proton gradient. In Mesorhizobium japonicum (strain LMG 29417 / CECT 9101 / MAFF 303099) (Mesorhizobium loti (strain MAFF 303099)), this protein is NADH-quinone oxidoreductase subunit I.